Reading from the N-terminus, the 327-residue chain is Interleukin-12 subunit beta (327 aa).

The first 22 residues, 1–22 (MCHQKLTISWFAMVLLVSPLMA), serve as a signal peptide directing secretion. Residues 23–106 (IWELEKDVYV…LSHSRLLLHK (84 aa)) form the Ig-like C2-type domain. Cysteines 50 and 90 form a disulfide. 4 N-linked (GlcNAc...) asparagine glycosylation sites follow: N125, N135, N223, and N315. The Fibronectin type-III domain occupies 238 to 327 (PPKNLQLKPL…WSEWASVSCN (90 aa)).

It belongs to the IL-12B family. In terms of assembly, heterodimer with IL12A; disulfide-linked. The heterodimer is known as interleukin IL-12. Heterodimer with IL23A; disulfide-linked. The heterodimer is known as interleukin IL-23. Also secreted as a monomer. Interacts with NBR1; this interaction promotes IL-12 secretion.

It is found in the secreted. In terms of biological role, cytokine that can act as a growth factor for activated T and NK cells, enhance the lytic activity of NK/lymphokine-activated killer cells, and stimulate the production of IFN-gamma by resting PBMC. Its function is as follows. Associates with IL23A to form the IL-23 interleukin, a heterodimeric cytokine which functions in innate and adaptive immunity. IL-23 may constitute with IL-17 an acute response to infection in peripheral tissues. IL-23 binds to a heterodimeric receptor complex composed of IL12RB1 and IL23R, activates the Jak-Stat signaling cascade, stimulates memory rather than naive T-cells and promotes production of pro-inflammatory cytokines. IL-23 induces autoimmune inflammation and thus may be responsible for autoimmune inflammatory diseases and may be important for tumorigenesis. The protein is Interleukin-12 subunit beta (IL12B) of Sigmodon hispidus (Hispid cotton rat).